The chain runs to 341 residues: Heat-inducible transcription repressor HrcA (341 aa).

It belongs to the HrcA family.

Its function is as follows. Negative regulator of class I heat shock genes (grpE-dnaK-dnaJ and groELS operons). Prevents heat-shock induction of these operons. The protein is Heat-inducible transcription repressor HrcA of Symbiobacterium thermophilum (strain DSM 24528 / JCM 14929 / IAM 14863 / T).